Consider the following 849-residue polypeptide: Probable ATP-dependent RNA helicase ddx20 (849 aa).

Residues 9–39 are disordered; the sequence is FSNPMNSNSSNNIENNNNSNNNNNNFKNNFK. The Q motif signature appears at 55–83; that stretch reads ITFSELLLQKEVLKGLEDGGYQRPSPIQL. Residues R77, Q82, 99–106, and 102–107 contribute to the ATP site; these read AKSGTGKT and GTGKTI. Residues 86–319 form the Helicase ATP-binding domain; that stretch reads IPLGISGVDL…KLYMNNENLV (234 aa). The DEAD box motif lies at 255 to 258; it reads DEAD. A Helicase C-terminal domain is found at 355-499; sequence KCKSLVLVLE…QIENENENEN (145 aa). Disordered stretches follow at residues 480–504, 572–644, 667–737, and 761–817; these read QQQQ…NNNE, INEN…ENDN, SNNN…YPHY, and NNYN…NNPY. Acidic residues-rich tracts occupy residues 583-595, 604-615, and 624-644; these read NEDE…EDDY, EDEEEEQEEDDY, and EEEE…ENDN. Composition is skewed to low complexity over residues 667–687 and 696–720; these read SNNN…NNHY and KNSI…SQSN.

It belongs to the DEAD box helicase family. DDX20 subfamily. As to quaternary structure, part of the core SMN complex.

It localises to the cytoplasm. The protein localises to the nucleus. The enzyme catalyses ATP + H2O = ADP + phosphate + H(+). Functionally, the SMN complex catalyzes the assembly of small nuclear ribonucleoproteins (snRNPs), the building blocks of the spliceosome, and thereby plays an important role in the splicing of cellular pre-mRNAs. Most spliceosomal snRNPs contain a common set of Sm proteins SNRPB, SNRPD1, SNRPD2, SNRPD3, SNRPE, SNRPF and SNRPG that assemble in a heptameric protein ring on the Sm site of the small nuclear RNA to form the core snRNP (Sm core). In the cytosol, the Sm proteins SNRPD1, SNRPD2, SNRPE, SNRPF and SNRPG are trapped in an inactive 6S pICln-Sm complex by the chaperone CLNS1A that controls the assembly of the core snRNP. To assemble core snRNPs, the SMN complex accepts the trapped 5Sm proteins from CLNS1A forming an intermediate. Binding of snRNA inside 5Sm triggers eviction of the SMN complex, thereby allowing binding of SNRPD3 and SNRPB to complete assembly of the core snRNP. May also play a role in the metabolism of small nucleolar ribonucleoprotein (snoRNPs). The chain is Probable ATP-dependent RNA helicase ddx20 (ddx20) from Dictyostelium discoideum (Social amoeba).